Here is a 298-residue protein sequence, read N- to C-terminus: Lipoyl synthase (298 aa).

[4Fe-4S] cluster contacts are provided by Cys-40, Cys-45, Cys-51, Cys-67, Cys-71, Cys-74, and Ser-280. One can recognise a Radical SAM core domain in the interval 53 to 269 (AVRRTATFMI…KEIALSKGFS (217 aa)).

This sequence belongs to the radical SAM superfamily. Lipoyl synthase family. The cofactor is [4Fe-4S] cluster.

The protein localises to the cytoplasm. The enzyme catalyses [[Fe-S] cluster scaffold protein carrying a second [4Fe-4S](2+) cluster] + N(6)-octanoyl-L-lysyl-[protein] + 2 oxidized [2Fe-2S]-[ferredoxin] + 2 S-adenosyl-L-methionine + 4 H(+) = [[Fe-S] cluster scaffold protein] + N(6)-[(R)-dihydrolipoyl]-L-lysyl-[protein] + 4 Fe(3+) + 2 hydrogen sulfide + 2 5'-deoxyadenosine + 2 L-methionine + 2 reduced [2Fe-2S]-[ferredoxin]. The protein operates within protein modification; protein lipoylation via endogenous pathway; protein N(6)-(lipoyl)lysine from octanoyl-[acyl-carrier-protein]. Functionally, catalyzes the radical-mediated insertion of two sulfur atoms into the C-6 and C-8 positions of the octanoyl moiety bound to the lipoyl domains of lipoate-dependent enzymes, thereby converting the octanoylated domains into lipoylated derivatives. In Geobacillus kaustophilus (strain HTA426), this protein is Lipoyl synthase.